We begin with the raw amino-acid sequence, 887 residues long: 3-hydroxy-3-methylglutaryl-coenzyme A reductase (887 aa).

At methionine 1–histidine 9 the chain is on the cytoplasmic side. Residues glycine 10–glycine 39 form a helical membrane-spanning segment. At asparagine 40–aspartate 56 the chain is on the lumenal side. The helical transmembrane segment at valine 57–phenylalanine 78 threads the bilayer. Residues aspartate 61–leucine 218 enclose the SSD domain. The short motif at tyrosine 75 to phenylalanine 78 is the INSIG-binding motif element. At glutamine 79–lysine 89 the chain is on the cytoplasmic side. A Glycyl lysine isopeptide (Lys-Gly) (interchain with G-Cter in ubiquitin) cross-link involves residue lysine 89. Residues tyrosine 90 to leucine 114 form a helical membrane-spanning segment. The Lumenal portion of the chain corresponds to aspartate 115–glutamate 123. Residues alanine 124 to serine 149 form a helical membrane-spanning segment. Over glutamine 150–arginine 159 the chain is Cytoplasmic. Residues glycine 160–valine 187 form a helical membrane-spanning segment. The Lumenal portion of the chain corresponds to arginine 188 to glutamate 191. The chain crosses the membrane as a helical span at residues isoleucine 192 to leucine 220. Over glutamate 221–lysine 248 the chain is Cytoplasmic. Lysine 248 participates in a covalent cross-link: Glycyl lysine isopeptide (Lys-Gly) (interchain with G-Cter in ubiquitin). Residues proline 249–alanine 275 form a helical membrane-spanning segment. At aspartate 276–lysine 314 the chain is on the lumenal side. A glycan (N-linked (GlcNAc...) asparagine) is linked at asparagine 281. Residues methionine 315 to phenylalanine 339 traverse the membrane as a helical segment. Residues glutamate 340 to alanine 887 are Cytoplasmic-facing. Catalysis depends on charge relay system residues glutamate 558, lysine 690, and aspartate 766. Catalysis depends on histidine 865, which acts as the Proton donor. Serine 871 carries the phosphoserine; by AMPK modification.

Belongs to the HMG-CoA reductase family. As to quaternary structure, homotetramer. Homodimer. Interacts (via its SSD) with INSIG1; the interaction, accelerated by sterols, leads to the recruitment of HMGCR to AMFR/gp78 for its ubiquitination by the sterol-mediated ERAD pathway. Interacts with UBIAD1. Post-translationally, undergoes sterol-mediated ubiquitination and ER-associated degradation (ERAD). Accumulation of sterols in the endoplasmic reticulum (ER) membrane, triggers binding of the reductase to the ER membrane protein INSIG1 or INSIG2. The INSIG1 binding leads to the recruitment of the ubiquitin ligase, AMFR/gp78, RNF139 or RNF145, initiating ubiquitination of the reductase. The ubiquitinated reductase is then extracted from the ER membrane and delivered to cytosolic 26S proteosomes by a mechanism probably mediated by the ATPase Valosin-containing protein VCP/p97. The INSIG2-binding leads to the recruitment of the ubiquitin ligase RNF139, initiating ubiquitination of the reductase. Lys-248 is the main site of ubiquitination. Ubiquitination is enhanced by the presence of a geranylgeranylated protein. In terms of processing, N-glycosylated. Deglycosylated by NGLY1 on release from the endoplasmic reticulum (ER) in a sterol-mediated manner. Phosphorylated. Phosphorylation at Ser-871 reduces the catalytic activity.

The protein resides in the endoplasmic reticulum membrane. It localises to the peroxisome membrane. It catalyses the reaction (R)-mevalonate + 2 NADP(+) + CoA = (3S)-3-hydroxy-3-methylglutaryl-CoA + 2 NADPH + 2 H(+). The protein operates within metabolic intermediate biosynthesis; (R)-mevalonate biosynthesis; (R)-mevalonate from acetyl-CoA: step 3/3. Regulated by a negative feedback mechanism through sterols and non-sterol metabolites derived from mevalonate. Phosphorylation at Ser-871 down-regulates the catalytic activity. Functionally, catalyzes the conversion of (3S)-hydroxy-3-methylglutaryl-CoA (HMG-CoA) to mevalonic acid, the rate-limiting step in the synthesis of cholesterol and other isoprenoids, thus plays a critical role in cellular cholesterol homeostasis. This chain is 3-hydroxy-3-methylglutaryl-coenzyme A reductase (HMGCR), found in Mesocricetus auratus (Golden hamster).